A 178-amino-acid polypeptide reads, in one-letter code: GTP-dependent dephospho-CoA kinase (178 aa).

5 residues coordinate GTP: D55, V57, D74, K76, and E127.

This sequence belongs to the GTP-dependent DPCK family.

The catalysed reaction is 3'-dephospho-CoA + GTP = GDP + CoA + H(+). Its pathway is cofactor biosynthesis; coenzyme A biosynthesis. Catalyzes the GTP-dependent phosphorylation of the 3'-hydroxyl group of dephosphocoenzyme A to form coenzyme A (CoA). The chain is GTP-dependent dephospho-CoA kinase from Saccharolobus islandicus (strain Y.G.57.14 / Yellowstone #1) (Sulfolobus islandicus).